We begin with the raw amino-acid sequence, 225 residues long: Biosynthetic peptidoglycan transglycosylase (225 aa).

A helical transmembrane segment spans residues 7–27 (SFLFKMVLILLIAPIVLVGVV).

This sequence belongs to the glycosyltransferase 51 family.

Its subcellular location is the cell inner membrane. It catalyses the reaction [GlcNAc-(1-&gt;4)-Mur2Ac(oyl-L-Ala-gamma-D-Glu-L-Lys-D-Ala-D-Ala)](n)-di-trans,octa-cis-undecaprenyl diphosphate + beta-D-GlcNAc-(1-&gt;4)-Mur2Ac(oyl-L-Ala-gamma-D-Glu-L-Lys-D-Ala-D-Ala)-di-trans,octa-cis-undecaprenyl diphosphate = [GlcNAc-(1-&gt;4)-Mur2Ac(oyl-L-Ala-gamma-D-Glu-L-Lys-D-Ala-D-Ala)](n+1)-di-trans,octa-cis-undecaprenyl diphosphate + di-trans,octa-cis-undecaprenyl diphosphate + H(+). It participates in cell wall biogenesis; peptidoglycan biosynthesis. Functionally, peptidoglycan polymerase that catalyzes glycan chain elongation from lipid-linked precursors. This is Biosynthetic peptidoglycan transglycosylase from Vibrio parahaemolyticus serotype O3:K6 (strain RIMD 2210633).